We begin with the raw amino-acid sequence, 180 residues long: Translation machinery-associated protein 16 homolog (180 aa).

Residues 1-12 are compositionally biased toward basic and acidic residues; sequence MTNLRKELEKCK. The tract at residues 1 to 32 is disordered; sequence MTNLRKELEKCKHPNSRKTKALGKKARRQNNK. Residues 13–32 show a composition bias toward basic residues; sequence HPNSRKTKALGKKARRQNNK.

Belongs to the TMA16 family.

This is Translation machinery-associated protein 16 homolog from Drosophila melanogaster (Fruit fly).